The sequence spans 88 residues: Small ribosomal subunit protein bS20 (88 aa).

The disordered stretch occupies residues 1–27; sequence MANSKSAKKRALQSEKRRQHNASRRSM.

It belongs to the bacterial ribosomal protein bS20 family.

Binds directly to 16S ribosomal RNA. The chain is Small ribosomal subunit protein bS20 from Shewanella baltica (strain OS223).